The primary structure comprises 482 residues: Nucleoside triphosphate pyrophosphatase/Nudix hydrolase fusion protein (482 aa).

Residues 1-299 (MSIPLILASK…DLWNVGRGEL (299 aa)) form a maf-like region. The active-site Proton acceptor is Asp-167. A Nudix hydrolase domain is found at 338 to 475 (GTNGASGILL…TDWPRFAARL (138 aa)).

In the N-terminal section; belongs to the Maf family. Requires a divalent metal cation as cofactor.

It is found in the cytoplasm. It catalyses the reaction a ribonucleoside 5'-triphosphate + H2O = a ribonucleoside 5'-phosphate + diphosphate + H(+). The catalysed reaction is a 2'-deoxyribonucleoside 5'-triphosphate + H2O = a 2'-deoxyribonucleoside 5'-phosphate + diphosphate + H(+). In terms of biological role, nucleoside triphosphate pyrophosphatase. May have a dual role in cell division arrest and in preventing the incorporation of modified nucleotides into cellular nucleic acids. The protein is Nucleoside triphosphate pyrophosphatase/Nudix hydrolase fusion protein of Bifidobacterium longum (strain NCC 2705).